The sequence spans 428 residues: Adenylosuccinate synthetase (428 aa).

GTP contacts are provided by residues 11–17 (GDEGKGK) and 39–41 (GHT). Residue D12 is the Proton acceptor of the active site. Mg(2+)-binding residues include D12 and G39. Residues 12–15 (DEGK), 37–40 (NAGH), T130, R144, N226, T241, and R305 contribute to the IMP site. The active-site Proton donor is H40. Residue 301-307 (VTTGRKR) participates in substrate binding. GTP is bound by residues R307, 333-335 (KLD), and 415-417 (GTG).

It belongs to the adenylosuccinate synthetase family. As to quaternary structure, homodimer. Mg(2+) serves as cofactor.

The protein resides in the cytoplasm. The catalysed reaction is IMP + L-aspartate + GTP = N(6)-(1,2-dicarboxyethyl)-AMP + GDP + phosphate + 2 H(+). Its pathway is purine metabolism; AMP biosynthesis via de novo pathway; AMP from IMP: step 1/2. In terms of biological role, plays an important role in the de novo pathway and in the salvage pathway of purine nucleotide biosynthesis. Catalyzes the first committed step in the biosynthesis of AMP from IMP. This is Adenylosuccinate synthetase from Candida tropicalis (strain ATCC MYA-3404 / T1) (Yeast).